A 328-amino-acid polypeptide reads, in one-letter code: Sialic acid-binding Ig-like lectin 15 (328 aa).

The signal sequence occupies residues 1-19 (MEKSIWLLACLAWVLPTGS). Residues 20–263 (FVRTKIDTTE…RFHGASGAST (244 aa)) lie on the Extracellular side of the membrane. The region spanning 40–158 (PAQRWSMQVP…DVHDRYESRH (119 aa)) is the Ig-like V-type domain. Intrachain disulfides connect Cys-64-Cys-142 and Cys-95-Cys-104. Arg-143 serves as a coordination point for N-acetylneuraminate. In terms of domain architecture, Ig-like C2-type spans 168-251 (PRIVNISVLP…SLGRSEASVY (84 aa)). N-linked (GlcNAc...) asparagine glycosylation occurs at Asn-172. Cys-187 and Cys-237 are joined by a disulfide. Residues 264–284 (VALLLGALGFKALLLLGVLAA) form a helical membrane-spanning segment. Topologically, residues 285–328 (RAARRRPEHLDTPDTPPRSQAQESNYENLSQMNPRSPPATMCSP) are cytoplasmic. The segment at 289 to 328 (RRPEHLDTPDTPPRSQAQESNYENLSQMNPRSPPATMCSP) is disordered. Residues 301-318 (PRSQAQESNYENLSQMNP) show a composition bias toward polar residues.

This sequence belongs to the immunoglobulin superfamily. SIGLEC (sialic acid binding Ig-like lectin) family. Interacts with TYROBP and HCST. As to expression, expressed in macrophage and/or dendritic cells of spleen and lymph nodes.

It is found in the membrane. Functionally, binds sialylated glycoproteins. This Homo sapiens (Human) protein is Sialic acid-binding Ig-like lectin 15 (SIGLEC15).